We begin with the raw amino-acid sequence, 578 residues long: Proline--tRNA ligase (578 aa).

It belongs to the class-II aminoacyl-tRNA synthetase family. ProS type 1 subfamily. Homodimer.

It is found in the cytoplasm. The catalysed reaction is tRNA(Pro) + L-proline + ATP = L-prolyl-tRNA(Pro) + AMP + diphosphate. Functionally, catalyzes the attachment of proline to tRNA(Pro) in a two-step reaction: proline is first activated by ATP to form Pro-AMP and then transferred to the acceptor end of tRNA(Pro). As ProRS can inadvertently accommodate and process non-cognate amino acids such as alanine and cysteine, to avoid such errors it has two additional distinct editing activities against alanine. One activity is designated as 'pretransfer' editing and involves the tRNA(Pro)-independent hydrolysis of activated Ala-AMP. The other activity is designated 'posttransfer' editing and involves deacylation of mischarged Ala-tRNA(Pro). The misacylated Cys-tRNA(Pro) is not edited by ProRS. In Burkholderia ambifaria (strain MC40-6), this protein is Proline--tRNA ligase.